The following is a 403-amino-acid chain: MAKEKVVLAYSGGLDTSVAVKWLTDKGYDVIAVGLDVGEGKDLEFVKQKALQVGAIQSYTIDAKKEYAESFVLPALQAHALYEQKYPLVSALSRPLISKKLVEIAEQTGATAVAHGCTGKGNDQVRFEVSIQALNPNLKVLAPVREWAWSRDEEIEYAKAHNIPIPIDLDNPYSVDQNLWGRSNECGVLEDPWATPPEGAYALTAPLEKTPDTPDIIELSFEKGVPVAINGEAYPLDQLILTLNEIAGKHGVGRIDHVENRLVGIKSREVYECPGAMTLIKAHKELEDLTLPKELAHFKPVIEKKLTELIYEGLWFSSLQPALLAFLKESQTHVTGVVRVKLFKGHAIIEGRKSAYSLYNEKLATYTPDDEFDHSAAVGFISLWGLPTKVHSMVTKEKKEVTL.

Position 9 to 17 (9 to 17 (AYSGGLDTS)) interacts with ATP. Tyr-86 is an L-citrulline binding site. Residue Gly-116 coordinates ATP. Residues Thr-118, Asn-122, and Asp-123 each coordinate L-aspartate. Residue Asn-122 participates in L-citrulline binding. Positions 126, 174, 183, 259, and 271 each coordinate L-citrulline.

Belongs to the argininosuccinate synthase family. Type 1 subfamily. As to quaternary structure, homotetramer.

The protein resides in the cytoplasm. The catalysed reaction is L-citrulline + L-aspartate + ATP = 2-(N(omega)-L-arginino)succinate + AMP + diphosphate + H(+). It functions in the pathway amino-acid biosynthesis; L-arginine biosynthesis; L-arginine from L-ornithine and carbamoyl phosphate: step 2/3. The chain is Argininosuccinate synthase from Shouchella clausii (strain KSM-K16) (Alkalihalobacillus clausii).